A 231-amino-acid chain; its full sequence is Ion-translocating oxidoreductase complex subunit E (231 aa).

The next 6 helical transmembrane spans lie at 18–38 (ALVQ…ATNA), 39–59 (LGLG…ISTL), 63–83 (TPAE…VSAV), 86–106 (LINA…PLIV), 125–145 (ALSA…MFVL), and 182–202 (PFLL…MLAG).

The protein belongs to the NqrDE/RnfAE family. As to quaternary structure, the complex is composed of six subunits: RsxA, RsxB, RsxC, RsxD, RsxE and RsxG.

It localises to the cell inner membrane. Its function is as follows. Part of a membrane-bound complex that couples electron transfer with translocation of ions across the membrane. Required to maintain the reduced state of SoxR. This Escherichia coli O1:K1 / APEC protein is Ion-translocating oxidoreductase complex subunit E.